Reading from the N-terminus, the 557-residue chain is 2-isopropylmalate synthase (557 aa).

The Pyruvate carboxyltransferase domain maps to 33-307 (PIWCSSDLRD…DPQLDFSDID (275 aa)). Mg(2+) is bound by residues Asp-42, His-246, His-248, and Asn-282. Residues 439–557 (ANAPYALVSH…SLSQQQAKAA (119 aa)) are regulatory domain.

Belongs to the alpha-IPM synthase/homocitrate synthase family. LeuA type 2 subfamily. In terms of assembly, homodimer. It depends on Mg(2+) as a cofactor.

Its subcellular location is the cytoplasm. It catalyses the reaction 3-methyl-2-oxobutanoate + acetyl-CoA + H2O = (2S)-2-isopropylmalate + CoA + H(+). The protein operates within amino-acid biosynthesis; L-leucine biosynthesis; L-leucine from 3-methyl-2-oxobutanoate: step 1/4. Catalyzes the condensation of the acetyl group of acetyl-CoA with 3-methyl-2-oxobutanoate (2-ketoisovalerate) to form 3-carboxy-3-hydroxy-4-methylpentanoate (2-isopropylmalate). The sequence is that of 2-isopropylmalate synthase from Pseudomonas entomophila (strain L48).